The following is a 375-amino-acid chain: tRNA-specific 2-thiouridylase MnmA (375 aa).

Residues 12–19 and M38 contribute to the ATP site; that span reads GMSGGVDS. The segment at 98–100 is interaction with target base in tRNA; that stretch reads NPD. C103 acts as the Nucleophile in catalysis. A disulfide bond links C103 and C200. G127 provides a ligand contact to ATP. Positions 150–152 are interaction with tRNA; the sequence is KDQ. C200 functions as the Cysteine persulfide intermediate in the catalytic mechanism. The tract at residues 312-313 is interaction with tRNA; it reads RY.

It belongs to the MnmA/TRMU family.

It is found in the cytoplasm. The enzyme catalyses S-sulfanyl-L-cysteinyl-[protein] + uridine(34) in tRNA + AH2 + ATP = 2-thiouridine(34) in tRNA + L-cysteinyl-[protein] + A + AMP + diphosphate + H(+). In terms of biological role, catalyzes the 2-thiolation of uridine at the wobble position (U34) of tRNA, leading to the formation of s(2)U34. The chain is tRNA-specific 2-thiouridylase MnmA from Lactobacillus helveticus (strain DPC 4571).